The chain runs to 498 residues: ATP synthase subunit beta, chloroplastic (498 aa).

Position 172–179 (172–179 (GGAGVGKT)) interacts with ATP.

Belongs to the ATPase alpha/beta chains family. F-type ATPases have 2 components, CF(1) - the catalytic core - and CF(0) - the membrane proton channel. CF(1) has five subunits: alpha(3), beta(3), gamma(1), delta(1), epsilon(1). CF(0) has four main subunits: a(1), b(1), b'(1) and c(9-12).

It is found in the plastid. The protein localises to the chloroplast thylakoid membrane. The enzyme catalyses ATP + H2O + 4 H(+)(in) = ADP + phosphate + 5 H(+)(out). Produces ATP from ADP in the presence of a proton gradient across the membrane. The catalytic sites are hosted primarily by the beta subunits. The chain is ATP synthase subunit beta, chloroplastic from Vitis vinifera (Grape).